We begin with the raw amino-acid sequence, 424 residues long: Tyrosine--tRNA ligase (424 aa).

An L-tyrosine-binding site is contributed by Y37. A 'HIGH' region motif is present at residues 42 to 51 (PTADSLHLGH). N6-acetyllysine is present on K144. L-tyrosine contacts are provided by Y175 and Q179. A 'KMSKS' region motif is present at residues 235 to 239 (KFGKT). An ATP-binding site is contributed by K238. The region spanning 357-414 (ADLMQALVDSELQPSRGQARKTIASNAITINGEKQSDPEYFFKEEDRLFGRFTLLRRG) is the S4 RNA-binding domain.

The protein belongs to the class-I aminoacyl-tRNA synthetase family. TyrS type 1 subfamily. As to quaternary structure, homodimer.

It localises to the cytoplasm. It carries out the reaction tRNA(Tyr) + L-tyrosine + ATP = L-tyrosyl-tRNA(Tyr) + AMP + diphosphate + H(+). Catalyzes the attachment of tyrosine to tRNA(Tyr) in a two-step reaction: tyrosine is first activated by ATP to form Tyr-AMP and then transferred to the acceptor end of tRNA(Tyr). This chain is Tyrosine--tRNA ligase, found in Escherichia coli (strain K12 / DH10B).